A 398-amino-acid chain; its full sequence is uncharacterized protein (398 aa).

This is an uncharacterized protein from Ostreid herpesvirus 1 (isolate France) (OsHV-1).